Reading from the N-terminus, the 550-residue chain is Glucose-6-phosphate isomerase 2 (550 aa).

The active-site Proton donor is glutamate 357. Active-site residues include histidine 388 and lysine 514. The disordered stretch occupies residues 527–550 (DTGALGHDSSTNGLIRHYRERHGK).

The protein belongs to the GPI family.

It is found in the cytoplasm. The catalysed reaction is alpha-D-glucose 6-phosphate = beta-D-fructose 6-phosphate. It participates in carbohydrate biosynthesis; gluconeogenesis. Its pathway is carbohydrate degradation; glycolysis; D-glyceraldehyde 3-phosphate and glycerone phosphate from D-glucose: step 2/4. Catalyzes the reversible isomerization of glucose-6-phosphate to fructose-6-phosphate. This is Glucose-6-phosphate isomerase 2 from Chromobacterium violaceum (strain ATCC 12472 / DSM 30191 / JCM 1249 / CCUG 213 / NBRC 12614 / NCIMB 9131 / NCTC 9757 / MK).